Reading from the N-terminus, the 105-residue chain is Serine protease inhibitor Kazal-type 6 (105 aa).

The N-terminal stretch at 1–23 (MKVAGVFLLLSLALLCFFSGEFS) is a signal peptide. Position 24 is a pyrrolidone carboxylic acid (glutamine 24). The Kazal-like domain maps to 49 to 105 (RLFQINCGEFRDPKVFCTRESDPLCGSDGQTYGNKCAFCKALEKSSGKINLKHRGKC). 3 cysteine pairs are disulfide-bonded: cysteine 55-cysteine 87, cysteine 65-cysteine 84, and cysteine 73-cysteine 105.

The protein localises to the secreted. Its function is as follows. Serine protease inhibitor selective for kallikreins. Efficiently inhibits KLK4, KLK5, KLK6, KLK7, KLK12, KLK13 and KLK14. Doesn't inhibit KLK8. In Rattus norvegicus (Rat), this protein is Serine protease inhibitor Kazal-type 6 (Spink6).